Consider the following 151-residue polypeptide: Small ribosomal subunit protein uS15 (151 aa).

The tract at residues 1–20 (MARLHSGKRGSSGSTRPLRT) is disordered.

It belongs to the universal ribosomal protein uS15 family. In terms of assembly, part of the 30S ribosomal subunit.

The sequence is that of Small ribosomal subunit protein uS15 from Methanococcus aeolicus (strain ATCC BAA-1280 / DSM 17508 / OCM 812 / Nankai-3).